Consider the following 808-residue polypeptide: N-terminal kinase-like protein (808 aa).

Residues 14-314 (FELIPEPPEG…PEDFCRHKVL (301 aa)) enclose the Protein kinase domain. 3 HEAT repeats span residues 350 to 388 (IIPV…VNTQ), 389 to 427 (IFPH…LNVE), and 507 to 545 (ILPV…EDPT). 3 disordered regions span residues 540 to 566 (VSED…GGAA), 587 to 646 (SHPT…RWDD), and 658 to 808 (SVLA…RKLD). Residues 556–566 (AASSPGMGGAA) show a composition bias toward low complexity. The segment covering 587-600 (SHPTTAPTETNIPQ) has biased composition (polar residues). Positions 601-617 (RPTPEGVPAPAPTPVPA) are enriched in pro residues. Over residues 660 to 680 (LAQQDDWSTGGQVSRASQVSN) the composition is skewed to polar residues. Positions 681-690 (SDHKSSKSPE) are enriched in basic and acidic residues. Serine 754 bears the Phosphoserine mark. A compositionally biased stretch (acidic residues) spans 755 to 764 (WGEDNWEGLE). A coiled-coil region spans residues 761-797 (EGLETDSRQVKAELARKKREERRREMEAKRAERKVAK). Composition is skewed to basic and acidic residues over residues 765–775 (TDSRQVKAELA) and 782–795 (RRRE…ERKV). The tract at residues 793–808 (RKVAKGPMKLGARKLD) is interaction with COPB1.

Belongs to the protein kinase superfamily. In terms of assembly, interacts with GORAB. Interacts with COPA, COPB1 and COPB2. Homooligomer. Interacts with AP2B1. As to expression, ubiquitous.

Its subcellular location is the cytoplasm. The protein resides in the cytoskeleton. It is found in the microtubule organizing center. The protein localises to the centrosome. It localises to the endoplasmic reticulum-Golgi intermediate compartment. Its subcellular location is the golgi apparatus. The protein resides in the cis-Golgi network. It is found in the nucleus. Functionally, regulates COPI-mediated retrograde protein traffic at the interface between the Golgi apparatus and the endoplasmic reticulum. Involved in the maintenance of the Golgi apparatus morphology. Its function is as follows. Acts as a transcriptional activator. It binds to three different types of GC-rich DNA binding sites (box-A, -B and -C) in the beta-polymerase promoter region. It also binds to the TERT promoter region. This Homo sapiens (Human) protein is N-terminal kinase-like protein (SCYL1).